We begin with the raw amino-acid sequence, 672 residues long: DNA ligase (672 aa).

NAD(+) is bound by residues 30–34, 79–80, and Glu110; these read DAVYD and SL. The N6-AMP-lysine intermediate role is filled by Lys112. NAD(+) is bound by residues Arg133, Glu170, Lys287, and Lys311. Residues Cys405, Cys408, Cys423, and Cys429 each coordinate Zn(2+). One can recognise a BRCT domain in the interval 590-672; the sequence is ADELPLSGKT…IALLTEHGAI (83 aa).

The protein belongs to the NAD-dependent DNA ligase family. LigA subfamily. Requires Mg(2+) as cofactor. It depends on Mn(2+) as a cofactor.

The catalysed reaction is NAD(+) + (deoxyribonucleotide)n-3'-hydroxyl + 5'-phospho-(deoxyribonucleotide)m = (deoxyribonucleotide)n+m + AMP + beta-nicotinamide D-nucleotide.. In terms of biological role, DNA ligase that catalyzes the formation of phosphodiester linkages between 5'-phosphoryl and 3'-hydroxyl groups in double-stranded DNA using NAD as a coenzyme and as the energy source for the reaction. It is essential for DNA replication and repair of damaged DNA. The sequence is that of DNA ligase from Marinomonas sp. (strain MWYL1).